Reading from the N-terminus, the 430-residue chain is Tol-Pal system protein TolB (430 aa).

Residues 1-21 (MKQAFRVALGFLVLWASVLHA) form the signal peptide.

The protein belongs to the TolB family. In terms of assembly, the Tol-Pal system is composed of five core proteins: the inner membrane proteins TolA, TolQ and TolR, the periplasmic protein TolB and the outer membrane protein Pal. They form a network linking the inner and outer membranes and the peptidoglycan layer.

It localises to the periplasm. In terms of biological role, part of the Tol-Pal system, which plays a role in outer membrane invagination during cell division and is important for maintaining outer membrane integrity. TolB occupies a key intermediary position in the Tol-Pal system because it communicates directly with both membrane-embedded components, Pal in the outer membrane and TolA in the inner membrane. The chain is Tol-Pal system protein TolB from Yersinia pestis.